A 366-amino-acid polypeptide reads, in one-letter code: Probable dual-specificity RNA methyltransferase RlmN (366 aa).

The Proton acceptor role is filled by glutamate 107. A Radical SAM core domain is found at 113 to 342 (AEERMTACLS…MAQKFHVTVR (230 aa)). Cysteine 120 and cysteine 353 are disulfide-bonded. 3 residues coordinate [4Fe-4S] cluster: cysteine 127, cysteine 131, and cysteine 134. Residues 177–178 (GE), serine 210, 233–235 (SLH), and asparagine 310 contribute to the S-adenosyl-L-methionine site. The active-site S-methylcysteine intermediate is the cysteine 353.

It belongs to the radical SAM superfamily. RlmN family. [4Fe-4S] cluster serves as cofactor.

It is found in the cytoplasm. The catalysed reaction is adenosine(2503) in 23S rRNA + 2 reduced [2Fe-2S]-[ferredoxin] + 2 S-adenosyl-L-methionine = 2-methyladenosine(2503) in 23S rRNA + 5'-deoxyadenosine + L-methionine + 2 oxidized [2Fe-2S]-[ferredoxin] + S-adenosyl-L-homocysteine. The enzyme catalyses adenosine(37) in tRNA + 2 reduced [2Fe-2S]-[ferredoxin] + 2 S-adenosyl-L-methionine = 2-methyladenosine(37) in tRNA + 5'-deoxyadenosine + L-methionine + 2 oxidized [2Fe-2S]-[ferredoxin] + S-adenosyl-L-homocysteine. Specifically methylates position 2 of adenine 2503 in 23S rRNA and position 2 of adenine 37 in tRNAs. The chain is Probable dual-specificity RNA methyltransferase RlmN from Chlorobium chlorochromatii (strain CaD3).